Reading from the N-terminus, the 209-residue chain is MHRQLRYAVLATALFASTAFAAARQELDTFTRGLKGLDGQFSQRVTDANGKVKENSSGRVALATPRQFRWEYAKPYRQLIVADGKKVWVFDPDLEQVTVRAQGSEEQNSPLVALINPALLDKKYDVSEEAAPRDGLQWLSLTPKVDTDASFQMASLGFGKDGLAKMEVVDAVGQRTTISFSGWKRNPAFAADTFRYTPAQGVDVVGDAH.

An N-terminal signal peptide occupies residues 1–21 (MHRQLRYAVLATALFASTAFA).

It belongs to the LolA family. Monomer.

Its subcellular location is the periplasm. In terms of biological role, participates in the translocation of lipoproteins from the inner membrane to the outer membrane. Only forms a complex with a lipoprotein if the residue after the N-terminal Cys is not an aspartate (The Asp acts as a targeting signal to indicate that the lipoprotein should stay in the inner membrane). The protein is Outer-membrane lipoprotein carrier protein of Xanthomonas oryzae pv. oryzae (strain MAFF 311018).